The sequence spans 622 residues: DNA mismatch repair protein MutL (622 aa).

The protein belongs to the DNA mismatch repair MutL/HexB family.

In terms of biological role, this protein is involved in the repair of mismatches in DNA. It is required for dam-dependent methyl-directed DNA mismatch repair. May act as a 'molecular matchmaker', a protein that promotes the formation of a stable complex between two or more DNA-binding proteins in an ATP-dependent manner without itself being part of a final effector complex. The protein is DNA mismatch repair protein MutL of Clostridium acetobutylicum (strain ATCC 824 / DSM 792 / JCM 1419 / IAM 19013 / LMG 5710 / NBRC 13948 / NRRL B-527 / VKM B-1787 / 2291 / W).